A 209-amino-acid polypeptide reads, in one-letter code: Large ribosomal subunit protein uL4 (209 aa).

A disordered region spans residues 46–72 (GTSSTKTRSEVRGSSKKPWKQKGTGRA). A compositionally biased stretch (basic residues) spans 59–72 (SSKKPWKQKGTGRA).

This sequence belongs to the universal ribosomal protein uL4 family. In terms of assembly, part of the 50S ribosomal subunit.

In terms of biological role, one of the primary rRNA binding proteins, this protein initially binds near the 5'-end of the 23S rRNA. It is important during the early stages of 50S assembly. It makes multiple contacts with different domains of the 23S rRNA in the assembled 50S subunit and ribosome. Forms part of the polypeptide exit tunnel. This Borreliella burgdorferi (strain ATCC 35210 / DSM 4680 / CIP 102532 / B31) (Borrelia burgdorferi) protein is Large ribosomal subunit protein uL4.